A 531-amino-acid polypeptide reads, in one-letter code: RCC1 and BTB domain-containing protein 1 (531 aa).

RCC1 repeat units follow at residues 40–91 (NDEV…LLST), 93–145 (DGVV…ALAA), 147–198 (GEVF…AVLD), 199–250 (NGEV…ALTD), 252–302 (GLLY…AAKT), and 304–356 (GGHV…FLTV). 2 consecutive BTB domains span residues 370–437 (ADLK…DLPP) and 470–499 (ENAF…INHL).

As to expression, ubiquitously expressed. In the retina, present in the nerve fiber layer and to a lesser extent in the inner and outer plexiform layers (at protein level).

Its subcellular location is the nucleus. May be involved in cell cycle regulation by chromatin remodeling. The sequence is that of RCC1 and BTB domain-containing protein 1 (RCBTB1) from Homo sapiens (Human).